A 160-amino-acid polypeptide reads, in one-letter code: Protein-export protein SecB (160 aa).

The protein belongs to the SecB family. As to quaternary structure, homotetramer, a dimer of dimers. One homotetramer interacts with 1 SecA dimer.

The protein localises to the cytoplasm. In terms of biological role, one of the proteins required for the normal export of preproteins out of the cell cytoplasm. It is a molecular chaperone that binds to a subset of precursor proteins, maintaining them in a translocation-competent state. It also specifically binds to its receptor SecA. The sequence is that of Protein-export protein SecB from Rhizobium johnstonii (strain DSM 114642 / LMG 32736 / 3841) (Rhizobium leguminosarum bv. viciae).